The primary structure comprises 502 residues: AMP phosphorylase (502 aa).

AMP contacts are provided by residues G168, S195–S200, and T204. Catalysis depends on D257, which acts as the Proton donor. AMP is bound by residues S265 and K289.

It belongs to the thymidine/pyrimidine-nucleoside phosphorylase family. Type 2 subfamily.

It catalyses the reaction AMP + phosphate = alpha-D-ribose 1,5-bisphosphate + adenine. The catalysed reaction is CMP + phosphate = cytosine + alpha-D-ribose 1,5-bisphosphate. It carries out the reaction UMP + phosphate = alpha-D-ribose 1,5-bisphosphate + uracil. Its function is as follows. Catalyzes the conversion of AMP and phosphate to adenine and ribose 1,5-bisphosphate (R15P). Exhibits phosphorylase activity toward CMP and UMP in addition to AMP. Functions in an archaeal AMP degradation pathway, together with R15P isomerase and RubisCO. In Hyperthermus butylicus (strain DSM 5456 / JCM 9403 / PLM1-5), this protein is AMP phosphorylase.